The chain runs to 213 residues: Superoxide dismutase [Fe] (213 aa).

Fe cation contacts are provided by His-28, His-82, Asp-164, and His-168.

The protein belongs to the iron/manganese superoxide dismutase family. Homotetramer. Fe cation serves as cofactor.

It catalyses the reaction 2 superoxide + 2 H(+) = H2O2 + O2. Destroys superoxide anion radicals which are normally produced within the cells and which are toxic to biological systems. The chain is Superoxide dismutase [Fe] (sodB) from Aquifex aeolicus (strain VF5).